Here is a 436-residue protein sequence, read N- to C-terminus: L-threonine dehydratase biosynthetic IlvA (436 aa).

The tract at residues 1–357 (MSETYVSEKS…HRGLKHYFLV (357 aa)) is catalytic. Lys70 bears the N6-(pyridoxal phosphate)lysine mark. Pyridoxal 5'-phosphate-binding positions include Asn97, 203–207 (GGGGL), and Ser329. Residues 353 to 427 (HYFLVNFPQK…SAIDSRRLEP (75 aa)) enclose the ACT-like domain. A regulatory region spans residues 358-436 (NFPQKPGQLR…PGTPEYEYLT (79 aa)).

It belongs to the serine/threonine dehydratase family. Homotetramer. Pyridoxal 5'-phosphate serves as cofactor.

The catalysed reaction is L-threonine = 2-oxobutanoate + NH4(+). Its pathway is amino-acid biosynthesis; L-isoleucine biosynthesis; 2-oxobutanoate from L-threonine: step 1/1. Functionally, catalyzes the anaerobic formation of alpha-ketobutyrate and ammonia from threonine in a two-step reaction. The first step involved a dehydration of threonine and a production of enamine intermediates (aminocrotonate), which tautomerizes to its imine form (iminobutyrate). Both intermediates are unstable and short-lived. The second step is the nonenzymatic hydrolysis of the enamine/imine intermediates to form 2-ketobutyrate and free ammonia. In the low water environment of the cell, the second step is accelerated by RidA. The chain is L-threonine dehydratase biosynthetic IlvA (ilvA) from Corynebacterium glutamicum (strain ATCC 13032 / DSM 20300 / JCM 1318 / BCRC 11384 / CCUG 27702 / LMG 3730 / NBRC 12168 / NCIMB 10025 / NRRL B-2784 / 534).